The sequence spans 146 residues: Large ribosomal subunit protein uL15 (146 aa).

Residues 1 to 65 (MSDIQLNSLK…GQMPLQRRLP (65 aa)) are disordered. The segment covering 24–34 (RGIGSGLGKTA) has biased composition (gly residues).

The protein belongs to the universal ribosomal protein uL15 family. As to quaternary structure, part of the 50S ribosomal subunit.

Functionally, binds to the 23S rRNA. The sequence is that of Large ribosomal subunit protein uL15 from Bordetella avium (strain 197N).